Here is a 553-residue protein sequence, read N- to C-terminus: Transcription factor MYB65 (553 aa).

Residues 1–44 (MSYTTATADSDDGMHSSIHNESPAPDSISNGCRSRGKRSVLKKG) form a disordered region. HTH myb-type domains lie at 38 to 90 (RSVL…ANHL) and 91 to 145 (RPNL…KRRQ). 2 consecutive DNA-binding regions (H-T-H motif) follow at residues 66–90 (WNAVQKHTSLARCGKSCRLRWANHL) and 118–141 (WAQMAEHLPGRTDNEIKNYWNTRI).

Mostly expressed in roots (e.g. root tips), stems, pollen, shoot apices, flowers and floral shoot tips, and, to a lower extent, in leaves and siliques.

The protein localises to the nucleus. In terms of biological role, transcriptional activator of alpha-amylase expression that binds to 5'-CAACTGTC-3' motif in target gene promoter. In vegetative tissues, inhibits growth by reducing cell proliferation. Promotes the expression of aleurone-related genes (e.g. CP1, CP, GASA1, BXL1 and BXL2) in seeds. Together with MYB33 and MYB101, promotes the programmed cell death (PCD) the vacuolation of protein storage vacuoles (PSVs) in the aleurone layers during seed germination. Together with MYB33, facilitates anther and tapetum development. This Arabidopsis thaliana (Mouse-ear cress) protein is Transcription factor MYB65.